Consider the following 589-residue polypeptide: Carbonic anhydrase (589 aa).

2 Alpha-carbonic anhydrase domains span residues 59–316 and 321–585; these read HDYN…YEYK and DKYN…YGYN. A substrate-binding site is contributed by 258–259; that stretch reads TT. The interval 390 to 589 is catalytic; the sequence is MQINFGDPPA…TVYGYNGAAA (200 aa). Zn(2+) contacts are provided by His-420, His-422, and His-440.

This sequence belongs to the alpha-carbonic anhydrase family. Requires Zn(2+) as cofactor.

It catalyses the reaction hydrogencarbonate + H(+) = CO2 + H2O. In terms of biological role, reversible hydration of carbon dioxide. The protein is Carbonic anhydrase (DCA) of Dunaliella salina (Green alga).